We begin with the raw amino-acid sequence, 380 residues long: Anthranilate phosphoribosyltransferase (380 aa).

The 5-phospho-alpha-D-ribose 1-diphosphate site is built by G109, N119, S121, T122, K142, S144, and S146. Positions 258 and 259 each coordinate Mg(2+).

Belongs to the anthranilate phosphoribosyltransferase family. In terms of assembly, homodimer. The cofactor is Mg(2+).

It carries out the reaction N-(5-phospho-beta-D-ribosyl)anthranilate + diphosphate = 5-phospho-alpha-D-ribose 1-diphosphate + anthranilate. Its pathway is amino-acid biosynthesis; L-tryptophan biosynthesis; L-tryptophan from chorismate: step 2/5. Its function is as follows. Catalyzes the transfer of the phosphoribosyl group of 5-phosphorylribose-1-pyrophosphate (PRPP) to anthranilate to yield N-(5'-phosphoribosyl)-anthranilate (PRA), the second step in tryptophan biosynthesis. This is Anthranilate phosphoribosyltransferase from Saccharomyces cerevisiae (strain ATCC 204508 / S288c) (Baker's yeast).